The chain runs to 290 residues: Probable endonuclease 4 (290 aa).

Zn(2+)-binding residues include histidine 69, histidine 109, glutamate 145, aspartate 179, histidine 182, histidine 216, aspartate 229, histidine 231, and glutamate 261.

This sequence belongs to the AP endonuclease 2 family. Requires Zn(2+) as cofactor.

It carries out the reaction Endonucleolytic cleavage to 5'-phosphooligonucleotide end-products.. Its function is as follows. Endonuclease IV plays a role in DNA repair. It cleaves phosphodiester bonds at apurinic or apyrimidinic (AP) sites, generating a 3'-hydroxyl group and a 5'-terminal sugar phosphate. This Chlorobium limicola (strain DSM 245 / NBRC 103803 / 6330) protein is Probable endonuclease 4.